The following is a 416-amino-acid chain: Serine hydroxymethyltransferase (416 aa).

(6S)-5,6,7,8-tetrahydrofolate contacts are provided by residues leucine 121 and 125–127 (GHL). Residue lysine 229 is modified to N6-(pyridoxal phosphate)lysine.

Belongs to the SHMT family. In terms of assembly, homodimer. Pyridoxal 5'-phosphate is required as a cofactor.

It localises to the cytoplasm. It catalyses the reaction (6R)-5,10-methylene-5,6,7,8-tetrahydrofolate + glycine + H2O = (6S)-5,6,7,8-tetrahydrofolate + L-serine. It functions in the pathway one-carbon metabolism; tetrahydrofolate interconversion. Its pathway is amino-acid biosynthesis; glycine biosynthesis; glycine from L-serine: step 1/1. Its function is as follows. Catalyzes the reversible interconversion of serine and glycine with tetrahydrofolate (THF) serving as the one-carbon carrier. This reaction serves as the major source of one-carbon groups required for the biosynthesis of purines, thymidylate, methionine, and other important biomolecules. Also exhibits THF-independent aldolase activity toward beta-hydroxyamino acids, producing glycine and aldehydes, via a retro-aldol mechanism. This chain is Serine hydroxymethyltransferase, found in Neisseria gonorrhoeae.